Here is a 196-residue protein sequence, read N- to C-terminus: Signal peptidase complex catalytic subunit SEC11 (196 aa).

Residues 1-14 (MLSSLSPYMANPRQ) lie on the Cytoplasmic side of the membrane. A helical; Signal-anchor for type II membrane protein transmembrane segment spans residues 15–33 (TFTQVLNFALVLSTAFMLW). The Lumenal portion of the chain corresponds to 34–196 (KGLSVYTNSA…MGLMVILQRE (163 aa)). Catalysis depends on charge relay system residues Ser53 and His92. Residues 101-133 (VPGKDKTKKGGKQGVEASPSSLESQKLLTKGDN) are disordered. Residues 118–133 (SPSSLESQKLLTKGDN) show a composition bias toward polar residues. Residue Asn134 is glycosylated (N-linked (GlcNAc...) asparagine). Asp138 functions as the Charge relay system in the catalytic mechanism. A C-terminal short (CTS) helix region spans residues 182–193 (VLLGFMGLMVIL).

The protein belongs to the peptidase S26B family. Component of the signal peptidase complex (SPC) composed of a catalytic subunit SEC11 and three accessory subunits SPC1, SPC2 and SPC3. The complex induces a local thinning of the ER membrane which is used to measure the length of the signal peptide (SP) h-region of protein substrates. This ensures the selectivity of the complex towards h-regions shorter than 18-20 amino acids. SPC associates with the translocon complex.

The protein resides in the endoplasmic reticulum membrane. It catalyses the reaction Cleavage of hydrophobic, N-terminal signal or leader sequences from secreted and periplasmic proteins.. Functionally, catalytic component of the signal peptidase complex (SPC) which catalyzes the cleavage of N-terminal signal sequences from nascent proteins as they are translocated into the lumen of the endoplasmic reticulum. Specifically cleaves N-terminal signal peptides that contain a hydrophobic alpha-helix (h-region) shorter than 18-20 amino acids. In Ajellomyces dermatitidis (strain ER-3 / ATCC MYA-2586) (Blastomyces dermatitidis), this protein is Signal peptidase complex catalytic subunit SEC11 (SEC11).